A 259-amino-acid polypeptide reads, in one-letter code: Caffeoyl-CoA O-methyltransferase 1 (259 aa).

The segment covering 1–14 (MATTTTEATKTSST) has biased composition (low complexity). Positions 1–29 (MATTTTEATKTSSTNGEDQKQSQNLRHQE) are disordered. Residue alanine 2 is modified to N-acetylalanine. Lysine 33 contributes to the substrate binding site. S-adenosyl-L-methionine contacts are provided by residues threonine 75, glutamate 97, 99–100 (GV), serine 105, aspartate 123, and alanine 152. Aspartate 175 contributes to the substrate binding site. Aspartate 175 contacts a divalent metal cation. Aspartate 177 provides a ligand contact to S-adenosyl-L-methionine. The a divalent metal cation site is built by aspartate 201 and asparagine 202. Asparagine 206 is a binding site for substrate.

This sequence belongs to the class I-like SAM-binding methyltransferase superfamily. Cation-dependent O-methyltransferase family. CCoAMT subfamily. A divalent metal cation is required as a cofactor. As to expression, expressed in stems and roots. Detected in leaves, siliques, flower buds, flowers. Expressed in the tapetum, but not in the endothecium. Detected in the vascular system of leaves and all flower organs, including stigma, stamens, petals and sepals.

The catalysed reaction is (E)-caffeoyl-CoA + S-adenosyl-L-methionine = (E)-feruloyl-CoA + S-adenosyl-L-homocysteine + H(+). It participates in aromatic compound metabolism; phenylpropanoid biosynthesis. In terms of biological role, methylates caffeoyl-CoA to feruloyl-CoA. Has a very low activity with caffeic acid and esculetin. Involved in scopoletin biosynthesis in roots. The polypeptide is Caffeoyl-CoA O-methyltransferase 1 (CCOAOMT1) (Arabidopsis thaliana (Mouse-ear cress)).